The following is a 125-amino-acid chain: MORF4 family-associated protein 1 (125 aa).

Positions 76–99 (ESALNHLQGAGGAEPRGPRAEKAD) are disordered. Positions 94–124 (RAEKADEKAQEMAKMAEMLVQLVRRIEKSES) form a coiled coil.

This sequence belongs to the MORF4 family-associated protein family. As to quaternary structure, found in a complex composed of MORF4L1, MRFAP1 and RB1. Interacts via its N-terminus with MORF4L1. Interacts with CSTB and MORF4L2.

The protein resides in the nucleus. It is found in the cytoplasm. It localises to the perinuclear region. The chain is MORF4 family-associated protein 1 from Rattus norvegicus (Rat).